The primary structure comprises 549 residues: Acetyl-coenzyme A transporter 1 (549 aa).

Positions 1 to 12 (MSPTISHKDSSR) are enriched in basic and acidic residues. The segment at 1 to 46 (MSPTISHKDSSRQRRPGNFSHSLDMKSGPLPPGGWDDSHLDSAGRE) is disordered. Residues 1–74 (MSPTISHKDS…PQSFRAELSS (74 aa)) are Cytoplasmic-facing. 2 positions are modified to phosphoserine: S22 and S42. Residues 36 to 46 (DDSHLDSAGRE) are compositionally biased toward basic and acidic residues. The chain crosses the membrane as a helical span at residues 75–95 (ILLLLFLYVLQGIPLGLAGSI). Residues 96 to 113 (PLILQSKNVSYTDQAFFS) are Extracellular-facing. N103 is a glycosylation site (N-linked (GlcNAc...) asparagine). A helical transmembrane segment spans residues 114-134 (FVFWPFSLKLLWAPLVDAVYV). The Cytoplasmic portion of the chain corresponds to 135-141 (KNFGRRK). Residues 142 to 162 (SWLVPTQYILGLFMIYLSTQV) traverse the membrane as a helical segment. The Extracellular segment spans residues 163–175 (DRLLGNTDDRTPD). A helical transmembrane segment spans residues 176–196 (VIALTVAFFLFEFLAATQDIA). Topologically, residues 197–217 (VDGWALTMLSRENVGYASTCN) are cytoplasmic. A helical transmembrane segment spans residues 218-238 (SVGQTAGYFLGNVLFLALESA). The Extracellular portion of the chain corresponds to 239–256 (DFCNKYLRFQPQPRGIVT). A helical membrane pass occupies residues 257–277 (LSDFLFFWGTVFLITTTLVAL). At 278–299 (LKKENEVSVVKEETQGITDTYK) the chain is on the cytoplasmic side. A helical transmembrane segment spans residues 300–320 (LLFAIIKMPAVLTFCLLILTA). Over 321-343 (KIGFSAADAVTGLKLVEEGVPKE) the chain is Extracellular. Residues 344–364 (HLALLAVPMVPLQIILPLIIS) traverse the membrane as a helical segment. The Cytoplasmic segment spans residues 365–378 (KYTAGPQPLNTFYK). Residues 379–398 (AMPYRLLLGLEYALLVWWTP) traverse the membrane as a helical segment. At 399 to 404 (KVEHQG) the chain is on the extracellular side. A helical transmembrane segment spans residues 405–425 (GFPIYYYIVVLLSYALHQVTV). Residues 426–508 (YSMYVSIMAF…LGGSCVTALD (83 aa)) lie on the Cytoplasmic side of the membrane. A helical membrane pass occupies residues 509-529 (GYYVESIICVFIGFGWWFFLG). Over 530 to 549 (PKFKKLQDEGSSSWKCKRNN) the chain is Extracellular.

The protein belongs to the SLC33A transporter family. Homodimerizes. As to expression, ubiquitous. Detected in heart, brain, placenta, lung, liver, skeletal muscle, kidney and pancreas. With strongest signals in pancreas.

It is found in the endoplasmic reticulum membrane. The enzyme catalyses acetyl-CoA(in) = acetyl-CoA(out). Functionally, acetyl-CoA transporter that mediates active acetyl-CoA import through the endoplasmic reticulum (ER) membrane into the ER lumen where specific ER-based acetyl-CoA:lysine acetyltransferases are responsible for the acetylation of ER-based protein substrates, such as BACE1. Necessary for O-acetylation of gangliosides. This is Acetyl-coenzyme A transporter 1 from Homo sapiens (Human).